A 1414-amino-acid chain; its full sequence is Alpha-(1-&gt;3)-arabinofuranosyltransferase (1414 aa).

The next 9 membrane-spanning stretches (helical) occupy residues 57–77, 81–101, 128–148, 167–187, 203–223, 273–293, 302–322, 352–372, and 389–409; these read YLFP…PGWV, LWWA…AEAL, AISS…PVIL, VALM…AAVI, AWWL…LLML, STTA…GLAL, LITM…GGLG, LPLA…GSAP, and VAVA…AWTA. Residues 687-845 form the F5/8 type C domain; it reads YPSDGADLVY…QYDASGFAHP (159 aa). A run of 4 helical transmembrane segments spans residues 1253 to 1273, 1297 to 1317, 1333 to 1353, and 1364 to 1384; these read VGLI…LIPV, ALVA…GAAM, VWDN…GSVL, and YVGH…FLAA. The disordered stretch occupies residues 1393-1414; sequence PEPSEDGRSAKPEHTGASAHAG. Positions 1394–1406 are enriched in basic and acidic residues; the sequence is EPSEDGRSAKPEH.

Its subcellular location is the membrane. It catalyses the reaction Adds an alpha-D-arabinofuranosyl group from trans,octacis-decaprenylphospho-beta-D-arabinofuranose at the 3-O-position of an alpha-(1-&gt;5)-arabinofuranan chain attached to a beta-(1-&gt;5)-galactofuranan chain.. It functions in the pathway cell wall biogenesis; cell wall polysaccharide biosynthesis. Functionally, involved in the biosynthesis of the arabinogalactan (AG) region of the mycolylarabinogalactan-peptidoglycan (mAGP) complex, an essential component of the mycobacterial cell wall. Catalyzes the addition of an arabinofuranosyl (Araf) residue from the sugar donor decaprenyl-phospho-arabinose (DPA) on the C-3 of an alpha-(1-&gt;5)-linked Araf from the arabinan backbone of AG. In Mycolicibacterium smegmatis (strain ATCC 700084 / mc(2)155) (Mycobacterium smegmatis), this protein is Alpha-(1-&gt;3)-arabinofuranosyltransferase (aftD).